We begin with the raw amino-acid sequence, 471 residues long: Glutamate--tRNA ligase (471 aa).

The 'HIGH' region signature appears at 9–19 (PSPTGYLHVGG). Residues C98, C100, C125, and H127 each contribute to the Zn(2+) site. The 'KMSKS' region motif lies at 237–241 (KLSKR). Residue K240 participates in ATP binding.

Belongs to the class-I aminoacyl-tRNA synthetase family. Glutamate--tRNA ligase type 1 subfamily. Monomer. Zn(2+) is required as a cofactor.

It localises to the cytoplasm. The catalysed reaction is tRNA(Glu) + L-glutamate + ATP = L-glutamyl-tRNA(Glu) + AMP + diphosphate. Functionally, catalyzes the attachment of glutamate to tRNA(Glu) in a two-step reaction: glutamate is first activated by ATP to form Glu-AMP and then transferred to the acceptor end of tRNA(Glu). This Salmonella arizonae (strain ATCC BAA-731 / CDC346-86 / RSK2980) protein is Glutamate--tRNA ligase.